Here is a 332-residue protein sequence, read N- to C-terminus: Adenine deaminase (332 aa).

Zn(2+) is bound by residues His-16, His-18, and His-196. Residue Glu-199 is the Proton donor of the active site. Asp-277 serves as a coordination point for Zn(2+). A substrate-binding site is contributed by Asp-278.

The protein belongs to the metallo-dependent hydrolases superfamily. Adenosine and AMP deaminases family. Adenine deaminase type 2 subfamily. Requires Zn(2+) as cofactor.

It catalyses the reaction adenine + H2O + H(+) = hypoxanthine + NH4(+). In terms of biological role, catalyzes the hydrolytic deamination of adenine to hypoxanthine. Plays an important role in the purine salvage pathway and in nitrogen catabolism. In Acinetobacter baylyi (strain ATCC 33305 / BD413 / ADP1), this protein is Adenine deaminase.